Consider the following 424-residue polypeptide: Serine--tRNA ligase (424 aa).

Position 231-233 (231-233 (TAE)) interacts with L-serine. Position 262-264 (262-264 (RSE)) interacts with ATP. L-serine is bound at residue glutamate 285. ATP is bound at residue 349-352 (EISS). Serine 385 is an L-serine binding site.

It belongs to the class-II aminoacyl-tRNA synthetase family. Type-1 seryl-tRNA synthetase subfamily. Homodimer. The tRNA molecule binds across the dimer.

It localises to the cytoplasm. The enzyme catalyses tRNA(Ser) + L-serine + ATP = L-seryl-tRNA(Ser) + AMP + diphosphate + H(+). The catalysed reaction is tRNA(Sec) + L-serine + ATP = L-seryl-tRNA(Sec) + AMP + diphosphate + H(+). The protein operates within aminoacyl-tRNA biosynthesis; selenocysteinyl-tRNA(Sec) biosynthesis; L-seryl-tRNA(Sec) from L-serine and tRNA(Sec): step 1/1. Its function is as follows. Catalyzes the attachment of serine to tRNA(Ser). Is also able to aminoacylate tRNA(Sec) with serine, to form the misacylated tRNA L-seryl-tRNA(Sec), which will be further converted into selenocysteinyl-tRNA(Sec). The protein is Serine--tRNA ligase of Bacillus cytotoxicus (strain DSM 22905 / CIP 110041 / 391-98 / NVH 391-98).